A 362-amino-acid chain; its full sequence is 3-dehydroquinate synthase (362 aa).

It belongs to the archaeal-type DHQ synthase family.

It carries out the reaction 2-amino-2,3,7-trideoxy-D-lyxo-hept-6-ulosonate + NAD(+) + H2O = 3-dehydroquinate + NH4(+) + NADH + H(+). In terms of biological role, catalyzes the oxidative deamination and cyclization of 2-amino-3,7-dideoxy-D-threo-hept-6-ulosonic acid (ADH) to yield 3-dehydroquinate (DHQ), which is fed into the canonical shikimic pathway of aromatic amino acid biosynthesis. The polypeptide is 3-dehydroquinate synthase (Methanothrix thermoacetophila (strain DSM 6194 / JCM 14653 / NBRC 101360 / PT) (Methanosaeta thermophila)).